The primary structure comprises 415 residues: Ammonium transporter Rh type A (415 aa).

The Cytoplasmic portion of the chain corresponds to 1-2 (MR). Residues 3-23 (FIFPTIAVLLEASMIVLFGFF) traverse the membrane as a helical segment. The Extracellular segment spans residues 24-51 (VKYETEQNAIQQPNSTNSTKVDRSLELY). N-linked (GlcNAc...) asparagine glycans are attached at residues N37 and N40. The chain crosses the membrane as a helical span at residues 52-72 (PLFQDVHVMIFVGFGFLMTFL). Residues 73-76 (KKYG) lie on the Cytoplasmic side of the membrane. A helical membrane pass occupies residues 77-97 (FSSVGINLLIAALGLQWGTFV). At 98 to 115 (QGMVHRHGQTIYIGIKNM) the chain is on the extracellular side. A helical transmembrane segment spans residues 116 to 136 (INADFSTATVLISFGAVLGKI). At 137–142 (SPTQML) the chain is on the cytoplasmic side. A helical membrane pass occupies residues 143–163 (IMTIIEITVFAGNEYVVGEIF). Residues 164–167 (QASD) are Extracellular-facing. A helical transmembrane segment spans residues 168–188 (IGASMTIHAFGAYFGLAVAGV). The Cytoplasmic portion of the chain corresponds to 189 to 208 (LYRTGLRKGHEKEESEYHSD). A helical membrane pass occupies residues 209–229 (LFAMIGTLFLWMFWPSFNSAI). The Extracellular segment spans residues 230 to 236 (AETAEEQ). A helical transmembrane segment spans residues 237-257 (YLAIINTYLSLVACVLTAYAM). Residues 258–268 (SSLVGHRGKLD) are Cytoplasmic-facing. The chain crosses the membrane as a helical span at residues 269–287 (MVHIQNATLAGGVAVGTCA). Topologically, residues 288–290 (DMK) are extracellular. A helical membrane pass occupies residues 291-311 (IHPYGSLIIGSIAGMVSVLGF). Residues 312 to 332 (RFLTPCLTAKLRIHDTCGVHN) lie on the Cytoplasmic side of the membrane. A helical transmembrane segment spans residues 333 to 353 (LHGLPGVVGGLSSIVAILLGV). Topologically, residues 354-363 (STASSMTMQA) are extracellular. Residues 364 to 384 (AALGSSIGSAIAGGLITGLIL) traverse the membrane as a helical segment. Residues 385 to 415 (RFIVRGQPSKDNFFDDSVYWEVPKEKELDNV) lie on the Cytoplasmic side of the membrane.

The protein belongs to the ammonium transporter (TC 2.A.49) family. Rh subfamily. In terms of assembly, homodimer. Heterotrimer; a RHCE monomer interacts with a RHAG homodimer. Component of the ankyrin-1 complex in the erythrocyte, composed of ANK1, RHCE, RHAG, SLC4A1, EPB42, GYPA, GYPB and AQP1. Interacts with GYPB (via the N-terminal); this interaction bridges the (RHAG)2(RHCE) heterotrimer with the SLC4A1 Band 3 I dimer complexed with GYPA. Glycosylated.

It localises to the membrane. It carries out the reaction methylamine(out) = methylamine(in). The enzyme catalyses NH4(+)(in) = NH4(+)(out). It catalyses the reaction CO2(out) = CO2(in). In terms of biological role, component of the ankyrin-1 complex, a multiprotein complex involved in the stability and shape of the erythrocyte membrane. Heterotrimer with RHCE (RHAG)2(RHCE), that transports ammonium and its related derivative methylammonium, in both neutral and ionic forms, across the erythrocyte membrane. The transport of NH4(+) is electrogenic and masks the NH3 transport. Also, may act as a CO2 channel. Moreover in erythrocyte, regulates RHD membrane expression and is associated with rhesus blood group antigen expression. In Canis lupus familiaris (Dog), this protein is Ammonium transporter Rh type A.